A 433-amino-acid chain; its full sequence is 3-phosphoshikimate 1-carboxyvinyltransferase (433 aa).

The 3-phosphoshikimate site is built by Lys-22, Ser-23, and Arg-27. Lys-22 contributes to the phosphoenolpyruvate binding site. Residues Gly-96 and Arg-129 each coordinate phosphoenolpyruvate. Ser-175, Ser-176, Gln-177, Ser-203, Asp-318, Asn-341, and Lys-345 together coordinate 3-phosphoshikimate. Phosphoenolpyruvate is bound at residue Gln-177. Asp-318 serves as the catalytic Proton acceptor. Arg-349, Arg-393, and Lys-418 together coordinate phosphoenolpyruvate.

The protein belongs to the EPSP synthase family. In terms of assembly, monomer.

It is found in the cytoplasm. It carries out the reaction 3-phosphoshikimate + phosphoenolpyruvate = 5-O-(1-carboxyvinyl)-3-phosphoshikimate + phosphate. Its pathway is metabolic intermediate biosynthesis; chorismate biosynthesis; chorismate from D-erythrose 4-phosphate and phosphoenolpyruvate: step 6/7. Functionally, catalyzes the transfer of the enolpyruvyl moiety of phosphoenolpyruvate (PEP) to the 5-hydroxyl of shikimate-3-phosphate (S3P) to produce enolpyruvyl shikimate-3-phosphate and inorganic phosphate. The chain is 3-phosphoshikimate 1-carboxyvinyltransferase from Mannheimia succiniciproducens (strain KCTC 0769BP / MBEL55E).